The primary structure comprises 183 residues: uncharacterized protein (183 aa).

Lys-21 is covalently cross-linked (Glycyl lysine isopeptide (Lys-Gly) (interchain with G-Cter in ubiquitin)). 2 disordered regions span residues Asn-24–Asn-111 and Pro-160–Pro-183. Low complexity predominate over residues Gln-99 to Gln-108. Residues Leu-170–Pro-183 show a composition bias toward polar residues.

The protein localises to the cytoplasm. This is an uncharacterized protein from Saccharomyces cerevisiae (strain ATCC 204508 / S288c) (Baker's yeast).